The following is a 498-amino-acid chain: ATP synthase subunit beta, chloroplastic (498 aa).

ATP is bound at residue 172-179 (GGAGVGKT).

The protein belongs to the ATPase alpha/beta chains family. F-type ATPases have 2 components, CF(1) - the catalytic core - and CF(0) - the membrane proton channel. CF(1) has five subunits: alpha(3), beta(3), gamma(1), delta(1), epsilon(1). CF(0) has four main subunits: a(1), b(1), b'(1) and c(9-12).

It is found in the plastid. The protein resides in the chloroplast thylakoid membrane. It catalyses the reaction ATP + H2O + 4 H(+)(in) = ADP + phosphate + 5 H(+)(out). Its function is as follows. Produces ATP from ADP in the presence of a proton gradient across the membrane. The catalytic sites are hosted primarily by the beta subunits. The chain is ATP synthase subunit beta, chloroplastic from Phalaenopsis aphrodite subsp. formosana (Moth orchid).